Here is a 100-residue protein sequence, read N- to C-terminus: Putative pterin-4-alpha-carbinolamine dehydratase (100 aa).

This sequence belongs to the pterin-4-alpha-carbinolamine dehydratase family.

The enzyme catalyses (4aS,6R)-4a-hydroxy-L-erythro-5,6,7,8-tetrahydrobiopterin = (6R)-L-erythro-6,7-dihydrobiopterin + H2O. The sequence is that of Putative pterin-4-alpha-carbinolamine dehydratase from Rhodopseudomonas palustris (strain ATCC BAA-98 / CGA009).